Consider the following 74-residue polypeptide: Delta-stichotoxin-Sgt2a (74 aa).

An N-terminal signal peptide occupies residues 1-19; the sequence is MNRLIILVFAAVFLTLASA. Residues 20–28 constitute a propeptide that is removed on maturation; it reads EVSEDVNMA. Intrachain disulfides connect C34–C71, C36–C64, and C57–C72.

Belongs to the sea anemone sodium channel inhibitory toxin family. Type I subfamily.

The protein localises to the secreted. The protein resides in the nematocyst. In terms of biological role, binds specifically to voltage-gated sodium channels (Nav), thereby delaying their inactivation during signal transduction. In Stichodactyla gigantea (Giant carpet anemone), this protein is Delta-stichotoxin-Sgt2a.